A 501-amino-acid chain; its full sequence is Cytochrome P450 71D6 (501 aa).

C442 serves as a coordination point for heme.

The protein belongs to the cytochrome P450 family. The cofactor is heme.

This chain is Cytochrome P450 71D6 (CYP71D6), found in Solanum chacoense (Chaco potato).